The following is a 159-amino-acid chain: Dihydrofolate reductase (159 aa).

Residues methionine 1–arginine 158 form the DHFR domain. Isoleucine 5 is a substrate binding site. NADP(+) is bound by residues alanine 7 and valine 13–alanine 19. Residue aspartate 27 participates in substrate binding. Residue histidine 45 to threonine 46 participates in NADP(+) binding. Positions 52 and 57 each coordinate substrate. NADP(+) is bound by residues serine 63–serine 64, lysine 76, and glycine 95–glutamine 102. Threonine 113 is a substrate binding site.

Belongs to the dihydrofolate reductase family.

The catalysed reaction is (6S)-5,6,7,8-tetrahydrofolate + NADP(+) = 7,8-dihydrofolate + NADPH + H(+). It participates in cofactor biosynthesis; tetrahydrofolate biosynthesis; 5,6,7,8-tetrahydrofolate from 7,8-dihydrofolate: step 1/1. In terms of biological role, key enzyme in folate metabolism. Catalyzes an essential reaction for de novo glycine and purine synthesis, and for DNA precursor synthesis. The polypeptide is Dihydrofolate reductase (folA) (Escherichia coli O6:H1 (strain CFT073 / ATCC 700928 / UPEC)).